A 463-amino-acid polypeptide reads, in one-letter code: tRNA-splicing endonuclease subunit Sen2 (463 aa).

A phosphoserine mark is found at serine 32 and serine 147. Residues 120–213 form a disordered region; the sequence is HDESTVQKIL…VASPSSLNGH (94 aa). 2 stretches are compositionally biased toward basic and acidic residues: residues 139–149 and 159–170; these read PYRERKGESPQ and SSLEGREGKDEL. Residues tyrosine 367 and histidine 375 contribute to the active site. Residues serine 406, serine 409, and serine 413 each carry the phosphoserine modification. Lysine 414 is a catalytic residue.

This sequence belongs to the tRNA-intron endonuclease family. TRNA splicing endonuclease is a heterotetramer composed of TSEN2, TSEN15, TSEN34/LENG5 and TSEN54. tRNA splicing endonuclease complex also contains proteins of the pre-mRNA 3'-end processing machinery such as CLP1, CPSF1, CPSF4 and CSTF2.

Its subcellular location is the nucleus. The protein resides in the nucleolus. The catalysed reaction is pretRNA = a 3'-half-tRNA molecule with a 5'-OH end + a 5'-half-tRNA molecule with a 2',3'-cyclic phosphate end + an intron with a 2',3'-cyclic phosphate and a 5'-hydroxyl terminus.. In terms of biological role, constitutes one of the two catalytic subunit of the tRNA-splicing endonuclease complex, a complex responsible for identification and cleavage of the splice sites in pre-tRNA. It cleaves pre-tRNA at the 5'- and 3'-splice sites to release the intron. The products are an intron and two tRNA half-molecules bearing 2',3'-cyclic phosphate and 5'-OH termini. There are no conserved sequences at the splice sites, but the intron is invariably located at the same site in the gene, placing the splice sites an invariant distance from the constant structural features of the tRNA body. Probably carries the active site for 5'-splice site cleavage. The tRNA splicing endonuclease is also involved in mRNA processing via its association with pre-mRNA 3'-end processing factors, establishing a link between pre-tRNA splicing and pre-mRNA 3'-end formation, suggesting that the endonuclease subunits function in multiple RNA-processing events. The polypeptide is tRNA-splicing endonuclease subunit Sen2 (Tsen2) (Rattus norvegicus (Rat)).